We begin with the raw amino-acid sequence, 574 residues long: uncharacterized protein (574 aa).

The interval 297 to 317 (SAASKPRKRKKDEVSGAQVNS) is disordered.

This is an uncharacterized protein from Mus musculus (Mouse).